A 1198-amino-acid polypeptide reads, in one-letter code: DNA polymerase (1198 aa).

3 disordered regions span residues 1–87, 179–199, and 904–930; these read MALV…PRGT, LEQPDGQGQAAEVEDHQPNPP, and QLALADSDAEESEDERAPTPFYSPPSG. 2 stretches are compositionally biased toward low complexity: residues 30–40 and 57–68; these read QQPTRAAPAPA and APPTSGGSPASP.

The protein belongs to the DNA polymerase type-B family. In terms of assembly, heterodimer with the terminal protein; this heterodimer binds to bp 9 to 18 of the genome. Forms a complex with viral pTP, DBP and hosts NFIA and POU2F1/OCT1 for initiation of replication.

It localises to the host nucleus. The enzyme catalyses DNA(n) + a 2'-deoxyribonucleoside 5'-triphosphate = DNA(n+1) + diphosphate. Eukaryotic-type DNA polymerase involved in viral genomic replication. DNA synthesis is protein primed, and acts in a strand displacement replication. Assembles in complex with viral pTP, DBP, host NFIA and host POU2F1/OCT1 on viral origin of replication. The polymerase covalently transfers dCMP onto pTP, thereby initiating complementary strand synthesis. This chain is DNA polymerase, found in Homo sapiens (Human).